A 477-amino-acid chain; its full sequence is Actin-related protein 7 (477 aa).

This sequence belongs to the actin family. In terms of assembly, forms a heterodimer with ARP9. Interacts with NPL6. Component of the two forms of the RSC complex composed of at least either RSC1 or RSC2, and ARP7, ARP9, LDB7, NPL6, RSC3, RSC30, RSC4, RSC58, RSC6, RSC8, RSC9, SFH1, STH1, HTL1 and probably RTT102. The complexes interact with histone and histone variant components of centromeric chromatin. Component of the SWI/SNF global transcription activator complex. The 1.14 MDa SWI/SNF complex is composed of 11 different subunits: one copy each of SWI1, SNF2/SWI2, SNF5, SNF12/SWP73, ARP7/SWP61, ARP9/SWP59; two copies each of SWI3, SNF6, SNF11, SWP82; and three copies of TAF14/SWP29.

The protein resides in the nucleus. Component of the chromatin structure remodeling complex (RSC), which is involved in transcription regulation and nucleosome positioning. RSC is responsible for the transfer of a histone octamer from a nucleosome core particle to naked DNA. The reaction requires ATP and involves an activated RSC-nucleosome intermediate. Remodeling reaction also involves DNA translocation, DNA twist and conformational change. As a reconfigurer of centromeric and flanking nucleosomes, RSC complex is required both for proper kinetochore function in chromosome segregation and, via a PKC1-dependent signaling pathway, for organization of the cellular cytoskeleton. This subunit is involved in transcriptional regulation. Heterodimer of ARP7 and ARP9 functions with HMG box proteins to facilitate proper chromatin architecture. Heterodimer formation is necessary for assembly into RSC complex. Part of the SWI/SNF complex, an ATP-dependent chromatin remodeling complex, is required for the positive and negative regulation of gene expression of a large number of genes. It changes chromatin structure by altering DNA-histone contacts within a nucleosome, leading eventually to a change in nucleosome position, thus facilitating or repressing binding of gene-specific transcription factors. The polypeptide is Actin-related protein 7 (ARP7) (Saccharomyces cerevisiae (strain ATCC 204508 / S288c) (Baker's yeast)).